The following is a 693-amino-acid chain: MAQGSHQIDFQVLHDLRQKFPEVPEVVVSRCMLQNNNNLDACCAVLSQESTRYLYGEGDLNFSDESGISGLRNHMTSLNLDLQSQNVYHHGREGSRVNGSRTLTHSVSDGQLQGGQSNNELFQQEPQTAPAQVPQGFNVFGMPSTSGASNSTPHLGFHLGSKGTSNLSQQTPRFNPIMVTLAPNIQTGRSTPTSLHIHGVPPPVLNSPQGNSIYIRPYITTPSGAARQTQQHSGWVSQFNPVNPQQAYQPSQPGPWTTYPASNPLPHTSTQQPNQQGHQTSHVYMPISSPTTPQPPTVHSSASSQSSAHSQYNIQNISTGPRKNQIEIKLEPPQRNSSSKLRSSGPRTASTSSLVNSQTLNRNQPTVYIAASPPSTDEMISRSQPKVYISANASTGDEQGMRNQPTLFISTNSGASAASRNMSGQVSMGPAFIHHHPPKSRVLGGNSAASPRVVVTQPNTKYTFKITVSPNKPPAVSPGVVSPTFELTNLLNHPDHYVETETIQHLTDPTLAHVDRVSEARKLSMGSDDAAYTQALLVHQKARMERLQRELEMQKKKLDKLKSEVNEMENSLTRRRLKRSNSMSQIPSLEEMQQLRSCNRQLQIDIDCLTKEIDLFQARGPHFNPSAIHNFYDNIGFVGPVPPKPKDQRSTIKAPKTQDTEDEEGAQWNCTACTFLNHPALIRCEQCEMPRHF.

Positions I8–T51 constitute a CUE domain. Residues H90 to S117 are disordered. The segment covering V97–S117 has biased composition (polar residues). R173 carries the asymmetric dimethylarginine modification. The span at G224 to H282 shows a compositional bias: polar residues. A disordered region spans residues G224–S310. Residues P286–S310 show a composition bias toward low complexity. A Glycyl lysine isopeptide (Lys-Gly) (interchain with G-Cter in SUMO) cross-link involves residue K329. The disordered stretch occupies residues L330–N361. The span at Q334–N361 shows a compositional bias: polar residues. Phosphoserine is present on residues S372, S450, S482, and S524. A coiled-coil region spans residues Y532 to R619. A Glycyl lysine isopeptide (Lys-Gly) (interchain with G-Cter in SUMO) cross-link involves residue K562. The disordered stretch occupies residues E564–M583. Phosphoserine is present on S582. A Glycyl lysine isopeptide (Lys-Gly) (interchain with G-Cter in ubiquitin) cross-link involves residue K611. The tract at residues P640–E663 is disordered. The segment at E663–F693 adopts a RanBP2-type zinc-finger fold. The tract at residues F675 to E685 is interaction with polyubiquitin.

In terms of assembly, interacts with MAP3K7 and TRAF6. Identified in the TRIKA2 complex composed of MAP3K7, TAB1 and TAB2. Binds 'Lys-63'-linked polyubiquitin chains. Interacts with NCOR1 and HDAC3 to form a ternary complex. Interacts (via C-terminal) with NUMBL (via PTB domain). Interacts (via the C-terminus) with DYNC2I2 (via WD domains). Interacts with RBCK1. Interacts with TRIM5. Interacts with TRIM38 (via B30.2/SPRY domain), leading to its translocation to lysosomes and degradation. Interacts with ASB1; this interaction promotes TAB2 stability. In terms of processing, SUMOylated by TRIM60; leading to inhibition of MAPK/NF-kappaB activation and the innate immune response. Ubiquitinated; following IL1 stimulation or TRAF6 overexpression. Ubiquitination involves RBCK1 leading to proteasomal degradation. Ubiquitinated at Lys-611 by TRIM45 leading to proteasomal degradation. Post-translationally, degraded in a lysosome-dependent manner following interaction with TRIM38. In terms of processing, phosphorylated.

It localises to the membrane. It is found in the endosome membrane. The protein resides in the lysosome membrane. Its subcellular location is the cytoplasm. The protein localises to the cytosol. Its function is as follows. Adapter required to activate the JNK and NF-kappa-B signaling pathways through the specific recognition of 'Lys-63'-linked polyubiquitin chains by its RanBP2-type zinc finger (NZF). Acts as an adapter linking MAP3K7/TAK1 and TRAF6 to 'Lys-63'-linked polyubiquitin chains. The RanBP2-type zinc finger (NZF) specifically recognizes Lys-63'-linked polyubiquitin chains unanchored or anchored to the substrate proteins such as RIPK1/RIP1 and RIPK2: this acts as a scaffold to organize a large signaling complex to promote autophosphorylation of MAP3K7/TAK1, and subsequent activation of I-kappa-B-kinase (IKK) core complex by MAP3K7/TAK1. Also recognizes and binds Lys-63'-linked polyubiquitin chains of heterotypic 'Lys-63'-/'Lys-48'-linked branched ubiquitin chains. Regulates the IL1-mediated translocation of NCOR1 out of the nucleus. Involved in heart development. The protein is TGF-beta-activated kinase 1 and MAP3K7-binding protein 2 (Tab2) of Rattus norvegicus (Rat).